Here is a 343-residue protein sequence, read N- to C-terminus: Farnesyl pyrophosphate synthase (343 aa).

Lys49, Arg52, and Gln87 together coordinate isopentenyl diphosphate. Residues Asp94 and Asp98 each coordinate Mg(2+). Arg103 provides a ligand contact to dimethylallyl diphosphate. Arg104 is a binding site for isopentenyl diphosphate. Dimethylallyl diphosphate-binding residues include Lys191, Thr192, Gln230, Lys247, and Lys256.

The protein belongs to the FPP/GGPP synthase family. It depends on Mg(2+) as a cofactor. Expressed both in apical and sub-apical cells of glandular secretory trichomes.

The protein resides in the cytoplasm. Its subcellular location is the nucleus. It catalyses the reaction isopentenyl diphosphate + dimethylallyl diphosphate = (2E)-geranyl diphosphate + diphosphate. It carries out the reaction isopentenyl diphosphate + (2E)-geranyl diphosphate = (2E,6E)-farnesyl diphosphate + diphosphate. It participates in isoprenoid biosynthesis; farnesyl diphosphate biosynthesis; farnesyl diphosphate from geranyl diphosphate and isopentenyl diphosphate: step 1/1. The protein operates within sesquiterpene biosynthesis. Its pathway is isoprenoid biosynthesis; geranyl diphosphate biosynthesis; geranyl diphosphate from dimethylallyl diphosphate and isopentenyl diphosphate: step 1/1. Involved in the biosynthesis of the antimalarial endoperoxide artemisinin. Catalyzes the sequential condensation of isopentenyl pyrophosphate with the allylic pyrophosphates, dimethylallyl pyrophosphate, and then with the resultant geranylpyrophosphate to the ultimate product farnesyl pyrophosphate. Promotes anti-malarial and antimicrobial (toward Gram-positive bacteria B.subtilis and S.aureus) activities of plant crude extract probably by triggering artemisinin levels. This chain is Farnesyl pyrophosphate synthase, found in Artemisia annua (Sweet wormwood).